We begin with the raw amino-acid sequence, 224 residues long: Glycerol-3-phosphate acyltransferase (224 aa).

6 helical membrane-spanning segments follow: residues 14–34 (INMIFYIVAFLFGGIPFGWLL), 70–90 (YLSILTIILDATKGLIVVLGA), 99–119 (TQWSIALLAILGHCYSPYLGF), 129–149 (IGSVLLLIPVEGICGLIIWGI), 162–182 (LIGVLGTIGLTFVLPYILPLP), and 185–205 (ISIIKQINTHTPLVLIGLFIF).

It belongs to the PlsY family. As to quaternary structure, probably interacts with PlsX.

The protein resides in the cell inner membrane. The catalysed reaction is an acyl phosphate + sn-glycerol 3-phosphate = a 1-acyl-sn-glycero-3-phosphate + phosphate. Its pathway is lipid metabolism; phospholipid metabolism. Its function is as follows. Catalyzes the transfer of an acyl group from acyl-phosphate (acyl-PO(4)) to glycerol-3-phosphate (G3P) to form lysophosphatidic acid (LPA). This enzyme utilizes acyl-phosphate as fatty acyl donor, but not acyl-CoA or acyl-ACP. In Helicobacter hepaticus (strain ATCC 51449 / 3B1), this protein is Glycerol-3-phosphate acyltransferase.